The following is a 233-amino-acid chain: Octanoyltransferase (233 aa).

The BPL/LPL catalytic domain maps to 36–211 (DTTPDEIWLV…EFTRQLGYPT (176 aa)). Residues 75–82 (RGGQVTYH), 142–144 (SLG), and 155–157 (GLA) contribute to the substrate site. Residue Cys173 is the Acyl-thioester intermediate of the active site.

The protein belongs to the LipB family.

It is found in the cytoplasm. The enzyme catalyses octanoyl-[ACP] + L-lysyl-[protein] = N(6)-octanoyl-L-lysyl-[protein] + holo-[ACP] + H(+). Its pathway is protein modification; protein lipoylation via endogenous pathway; protein N(6)-(lipoyl)lysine from octanoyl-[acyl-carrier-protein]: step 1/2. Its function is as follows. Catalyzes the transfer of endogenously produced octanoic acid from octanoyl-acyl-carrier-protein onto the lipoyl domains of lipoate-dependent enzymes. Lipoyl-ACP can also act as a substrate although octanoyl-ACP is likely to be the physiological substrate. The sequence is that of Octanoyltransferase from Yersinia pseudotuberculosis serotype O:3 (strain YPIII).